Here is a 259-residue protein sequence, read N- to C-terminus: 12alpha-hydroxysteroid dehydrogenase (259 aa).

Tyrosine 162 (proton acceptor) is an active-site residue.

This sequence belongs to the short-chain dehydrogenases/reductases (SDR) family. As to quaternary structure, homotetramer.

The enzyme catalyses cholate + NADP(+) = 3alpha,7alpha-dihydroxy-12-oxo-5beta-cholanate + NADPH + H(+). It catalyses the reaction deoxycholate + NADP(+) = 12-dehydrodeoxycholate + NADPH + H(+). Catalyzes the oxidation of the 12alpha-hydroxy group of bile acids, like cholate and deoxycholate. Is also able to catalyze the reverse reaction in vitro. Is likely involved in an epimerization pathway of bile acids that converts hydroxy groups from alpha to beta positions via stable oxo-intermediates, which occurs in the human gut. The polypeptide is 12alpha-hydroxysteroid dehydrogenase (Clostridium sp. (strain ATCC 29733 / VPI C48-50)).